We begin with the raw amino-acid sequence, 372 residues long: Putative glutamate--cysteine ligase 2 (372 aa).

The protein belongs to the glutamate--cysteine ligase type 2 family. YbdK subfamily. As to quaternary structure, homodimer.

It catalyses the reaction L-cysteine + L-glutamate + ATP = gamma-L-glutamyl-L-cysteine + ADP + phosphate + H(+). In terms of biological role, ATP-dependent carboxylate-amine ligase which exhibits weak glutamate--cysteine ligase activity. The protein is Putative glutamate--cysteine ligase 2 (ybdK) of Salmonella agona (strain SL483).